The following is a 327-amino-acid chain: Methionyl-tRNA formyltransferase (327 aa).

Serine 121–proline 124 contributes to the (6S)-5,6,7,8-tetrahydrofolate binding site.

This sequence belongs to the Fmt family.

It catalyses the reaction L-methionyl-tRNA(fMet) + (6R)-10-formyltetrahydrofolate = N-formyl-L-methionyl-tRNA(fMet) + (6S)-5,6,7,8-tetrahydrofolate + H(+). In terms of biological role, attaches a formyl group to the free amino group of methionyl-tRNA(fMet). The formyl group appears to play a dual role in the initiator identity of N-formylmethionyl-tRNA by promoting its recognition by IF2 and preventing the misappropriation of this tRNA by the elongation apparatus. This Burkholderia pseudomallei (strain 1106a) protein is Methionyl-tRNA formyltransferase.